Here is a 513-residue protein sequence, read N- to C-terminus: Voltage-gated potassium channel regulatory subunit KCNG1 (513 aa).

At 1-224 the chain is on the cytoplasmic side; it reads MTLLPGDNSD…DMVERPHSGL (224 aa). Residues 184 to 204 are disordered; it reads EEDDALDSEGRDSEGPAEGEG. Basic and acidic residues predominate over residues 191–204; that stretch reads SEGRDSEGPAEGEG. The chain crosses the membrane as a helical span at residues 225 to 246; the sequence is PGKVFACLSVLFVTVTAVNLSV. Residues 247-267 lie on the Extracellular side of the membrane; that stretch reads STLPSLREEEEQGHCSQMCHN. Residues 268–289 traverse the membrane as a helical segment; that stretch reads VFIVESVCVGWFSLEFLLRLIQ. Topologically, residues 290–300 are cytoplasmic; it reads APSKFAFLRSP. The chain crosses the membrane as a helical span at residues 301–321; the sequence is LTLIDLVAILPYYITLLVDGA. Over 322-338 the chain is Extracellular; the sequence is AAGRRKPGAGNSYLDKV. The helical; Voltage-sensor transmembrane segment at 339 to 359 threads the bilayer; that stretch reads GLVLRVLRALRILYVMRLARH. At 360 to 374 the chain is on the cytoplasmic side; the sequence is SLGLQTLGLTARRCT. A helical transmembrane segment spans residues 375–396; sequence REFGLLLLFLCVAIALFAPLLY. The Extracellular portion of the chain corresponds to 397–411; that stretch reads VIENEMADSPEFTSI. An intramembrane region (helical) is located at residues 412-423; that stretch reads PACYWWAVITMT. A Selectivity filter motif is present at residues 424–429; it reads TVGYGD. Residues 424-431 lie within the membrane without spanning it; that stretch reads TVGYGDMV. Residues 432 to 438 lie on the Extracellular side of the membrane; the sequence is PRSTPGQ. Residues 439 to 467 traverse the membrane as a helical segment; the sequence is VVALSSILSGILLMAFPVTSIFHTFSRSY. At 468-513 the chain is on the cytoplasmic side; it reads LELKQEQERVMFRRAQFLIKTKSQLSVSQDSDILFGSASSDTRDNN.

This sequence belongs to the potassium channel family. G (TC 1.A.1.2) subfamily. Kv6.1/KCNG1 sub-subfamily. As to quaternary structure, heterotetramer with KCNB1. Heterotetramer with KCNB2. In terms of tissue distribution, expressed in brain and placenta, and at much lower levels in kidney and pancreas.

It is found in the cell membrane. In terms of biological role, regulatory alpha-subunit of the voltage-gated potassium (Kv) channel which, when coassembled with KCNB1 or KCNB2, can modulate their expression and their gating kinetics by acting on deactivation upon repolarization and inactivation during maintained depolarization. Potassium channel subunit that does not form functional channels by itself. The polypeptide is Voltage-gated potassium channel regulatory subunit KCNG1 (Homo sapiens (Human)).